An 85-amino-acid polypeptide reads, in one-letter code: Progonadoliberin-2 (85 aa).

The N-terminal stretch at 1–23 (MCVSRLALLLGLLLCVGAQLSFA) is a signal peptide. Glutamine 24 bears the Pyrrolidone carboxylic acid mark. Position 33 is a glycine amide (glycine 33).

This sequence belongs to the GnRH family. Expressed in only one cell group in the mesencephalon.

It localises to the secreted. In terms of biological role, stimulates the secretion of gonadotropins. The protein is Progonadoliberin-2 (gnrh2) of Haplochromis burtoni (Burton's mouthbrooder).